We begin with the raw amino-acid sequence, 229 residues long: Transmembrane emp24 domain-containing protein 5 (229 aa).

Residues 1 to 27 (MGVRMWLPFPMLLLSALPATLLSGAAG) form the signal peptide. The Lumenal segment spans residues 28–196 (FTPSLDSDFT…IQESNFDRVN (169 aa)). The GOLD domain occupies 45 to 126 (KECFYQPMPL…EKVIFFELIL (82 aa)). The helical transmembrane segment at 197 to 217 (FWSVVNLMVMVVVSAIQVYTL) threads the bilayer. Residues 218–229 (KSLFEDKRKSRT) lie on the Cytoplasmic side of the membrane.

It belongs to the EMP24/GP25L family. In terms of assembly, interacts with TMED9 and TMED10.

The protein localises to the endoplasmic reticulum membrane. It localises to the golgi apparatus. Its subcellular location is the cis-Golgi network membrane. The protein resides in the endoplasmic reticulum-Golgi intermediate compartment membrane. Potential role in vesicular protein trafficking, mainly in the early secretory pathway. Required for the maintenance of the Golgi apparatus; involved in protein exchange between Golgi stacks during assembly. Probably not required for COPI-vesicle-mediated retrograde transport. The sequence is that of Transmembrane emp24 domain-containing protein 5 (Tmed5) from Rattus norvegicus (Rat).